The primary structure comprises 89 residues: Exodeoxyribonuclease 7 small subunit (89 aa).

The interval 1–23 (MRPWRCVSMAKAPAAPSSTQPDP) is disordered.

Belongs to the XseB family. As to quaternary structure, heterooligomer composed of large and small subunits.

It localises to the cytoplasm. It catalyses the reaction Exonucleolytic cleavage in either 5'- to 3'- or 3'- to 5'-direction to yield nucleoside 5'-phosphates.. In terms of biological role, bidirectionally degrades single-stranded DNA into large acid-insoluble oligonucleotides, which are then degraded further into small acid-soluble oligonucleotides. This Acidovorax sp. (strain JS42) protein is Exodeoxyribonuclease 7 small subunit.